We begin with the raw amino-acid sequence, 295 residues long: Probable phosphoglycerate mutase PMU1 (295 aa).

H61 acts as the Tele-phosphohistidine intermediate in catalysis. The active-site Proton donor/acceptor is the E170.

The protein belongs to the phosphoglycerate mutase family.

Its subcellular location is the cytoplasm. It localises to the nucleus. Probable phosphomutase that may have a function related to the manipulation of phosphate groups on carbohydrates. Reduces trehalose-6-phosphate levels when overexpressed in TPS2-deleted cells. Reduces 5'-Phosphoribosyl-4-carboxamide-5-aminoimidazole (AICAR) levels, a metabolic intermediate at the crossroads between AMP and histidine biosynthesis pathways, when overexpressed in a ADE3-ADE16-ADE17 triple deletant. The sequence is that of Probable phosphoglycerate mutase PMU1 from Saccharomyces cerevisiae (strain ATCC 204508 / S288c) (Baker's yeast).